The following is a 197-amino-acid chain: Recombination protein RecR (197 aa).

A C4-type zinc finger spans residues 57–72 (CSVCFALTEQNPCPIC). A Toprim domain is found at 79–174 (SVICVVETSQ…RVTRLAHGIP (96 aa)).

This sequence belongs to the RecR family.

May play a role in DNA repair. It seems to be involved in an RecBC-independent recombinational process of DNA repair. It may act with RecF and RecO. This Trichlorobacter lovleyi (strain ATCC BAA-1151 / DSM 17278 / SZ) (Geobacter lovleyi) protein is Recombination protein RecR.